Consider the following 216-residue polypeptide: Maleylacetoacetate isomerase (216 aa).

At Met1 the chain carries N-acetylmethionine. Residues 4 to 87 (GKPILYSYFR…YLEETRPIPR (84 aa)) form the GST N-terminal domain. Glutathione is bound by residues 14 to 19 (SSCSWR) and Gln45. Lys57 carries the N6-succinyllysine modification. Glutathione is bound by residues Val59, 71-72 (QS), Gln111, and 115-117 (NLS). The GST C-terminal domain maps to 92-212 (DPQKRAIVRM…HPRRQPDTPA (121 aa)). Phosphothreonine is present on Thr136. Ser137 is subject to Phosphoserine. Position 177 is an N6-succinyllysine (Lys177). Ser181 is subject to Phosphoserine.

It belongs to the GST superfamily. Zeta family. Homodimer. It depends on glutathione as a cofactor. In terms of tissue distribution, expressed in liver, kidney, seminal glands and breast.

It localises to the cytoplasm. The enzyme catalyses 4-maleylacetoacetate = 4-fumarylacetoacetate. It catalyses the reaction RX + glutathione = an S-substituted glutathione + a halide anion + H(+). Its pathway is amino-acid degradation; L-phenylalanine degradation; acetoacetate and fumarate from L-phenylalanine: step 5/6. Probable bifunctional enzyme showing minimal glutathione-conjugating activity with ethacrynic acid and 7-chloro-4-nitrobenz-2-oxa-1, 3-diazole and maleylacetoacetate isomerase activity. Also has low glutathione peroxidase activity with t-butyl and cumene hydroperoxides. Is able to catalyze the glutathione dependent oxygenation of dichloroacetic acid to glyoxylic acid. The sequence is that of Maleylacetoacetate isomerase (Gstz1) from Mus musculus (Mouse).